Reading from the N-terminus, the 485-residue chain is Adenosylhomocysteinase (485 aa).

Residues T60, D146, and E208 each contribute to the substrate site. An NAD(+)-binding site is contributed by 209–211 (TTT). Substrate is bound by residues K238 and D242. Residues N243, 272–277 (GYGDVG), E295, N330, 351–353 (IGH), and N399 each bind NAD(+).

Belongs to the adenosylhomocysteinase family. NAD(+) serves as cofactor.

Its subcellular location is the cytoplasm. It catalyses the reaction S-adenosyl-L-homocysteine + H2O = L-homocysteine + adenosine. Its pathway is amino-acid biosynthesis; L-homocysteine biosynthesis; L-homocysteine from S-adenosyl-L-homocysteine: step 1/1. In terms of biological role, may play a key role in the regulation of the intracellular concentration of adenosylhomocysteine. This Streptomyces avermitilis (strain ATCC 31267 / DSM 46492 / JCM 5070 / NBRC 14893 / NCIMB 12804 / NRRL 8165 / MA-4680) protein is Adenosylhomocysteinase.